Reading from the N-terminus, the 60-residue chain is Alpha-conotoxin-like 289 (60 aa).

The first 16 residues, 1–16 (MFTVFLLVVLATTVVS), serve as a signal peptide directing secretion. Residues 17–42 (FTSDRAFRGRNAAAKASGLVGLTDKR) constitute a propeptide that is removed on maturation. Q43 carries the post-translational modification Pyrrolidone carboxylic acid. Cystine bridges form between C45/C51 and C46/C59. Residues 47 to 49 (SYP) are ser-Xaa-Pro motif, crucial for potent interaction with nAChR. C59 is subject to Cysteine amide.

The protein belongs to the conotoxin A superfamily. In terms of tissue distribution, expressed by the venom duct.

Its subcellular location is the secreted. Its function is as follows. Alpha-conotoxins act on postsynaptic membranes, they bind to the nicotinic acetylcholine receptors (nAChR) and thus inhibit them. In Conus ammiralis (Admiral cone), this protein is Alpha-conotoxin-like 289.